The chain runs to 490 residues: Glutamate--tRNA ligase (490 aa).

The 'HIGH' region motif lies at 13 to 23 (PSPTGTPHVGL). The 'KMSKS' region signature appears at 257 to 261 (KLSKR). Lysine 260 contacts ATP.

The protein belongs to the class-I aminoacyl-tRNA synthetase family. Glutamate--tRNA ligase type 1 subfamily. In terms of assembly, monomer.

It is found in the cytoplasm. The enzyme catalyses tRNA(Glu) + L-glutamate + ATP = L-glutamyl-tRNA(Glu) + AMP + diphosphate. In terms of biological role, catalyzes the attachment of glutamate to tRNA(Glu) in a two-step reaction: glutamate is first activated by ATP to form Glu-AMP and then transferred to the acceptor end of tRNA(Glu). The chain is Glutamate--tRNA ligase from Mycobacterium bovis (strain BCG / Pasteur 1173P2).